We begin with the raw amino-acid sequence, 111 residues long: Nucleoid-associated protein Cpha266_1171 (111 aa).

Belongs to the YbaB/EbfC family. Homodimer.

It localises to the cytoplasm. The protein localises to the nucleoid. Binds to DNA and alters its conformation. May be involved in regulation of gene expression, nucleoid organization and DNA protection. This Chlorobium phaeobacteroides (strain DSM 266 / SMG 266 / 2430) protein is Nucleoid-associated protein Cpha266_1171.